The primary structure comprises 116 residues: MSNHKLIEAVTKSQLRTDLPTFRSGDTLRVHVRIVEGSRERIQVFEGVVIKRRGGGISETFTVRKISSGVGVERTFPLHTPKIEKIEVKRRGKVRRAKLYYLRSLRGKAARIQEIR.

Belongs to the bacterial ribosomal protein bL19 family.

In terms of biological role, this protein is located at the 30S-50S ribosomal subunit interface and may play a role in the structure and function of the aminoacyl-tRNA binding site. This Staphylococcus epidermidis (strain ATCC 35984 / DSM 28319 / BCRC 17069 / CCUG 31568 / BM 3577 / RP62A) protein is Large ribosomal subunit protein bL19.